A 175-amino-acid polypeptide reads, in one-letter code: Ribosome maturation factor RimM (175 aa).

The PRC barrel domain maps to 93-167 (DDEFYYSDLI…YIIITLPEVI (75 aa)).

It belongs to the RimM family. Binds ribosomal protein uS19.

The protein resides in the cytoplasm. An accessory protein needed during the final step in the assembly of 30S ribosomal subunit, possibly for assembly of the head region. Essential for efficient processing of 16S rRNA. May be needed both before and after RbfA during the maturation of 16S rRNA. It has affinity for free ribosomal 30S subunits but not for 70S ribosomes. The chain is Ribosome maturation factor RimM from Ehrlichia chaffeensis (strain ATCC CRL-10679 / Arkansas).